The primary structure comprises 240 residues: UDP-2,3-diacylglucosamine hydrolase (240 aa).

Mn(2+)-binding residues include D8, H10, D41, N79, and H114. Position 79–80 (79–80 (NR)) interacts with substrate. Substrate-binding residues include D122, S160, T164, K167, and H195. Mn(2+)-binding residues include H195 and H197.

This sequence belongs to the LpxH family. Mn(2+) is required as a cofactor.

It localises to the cell inner membrane. It catalyses the reaction UDP-2-N,3-O-bis[(3R)-3-hydroxytetradecanoyl]-alpha-D-glucosamine + H2O = 2-N,3-O-bis[(3R)-3-hydroxytetradecanoyl]-alpha-D-glucosaminyl 1-phosphate + UMP + 2 H(+). It functions in the pathway glycolipid biosynthesis; lipid IV(A) biosynthesis; lipid IV(A) from (3R)-3-hydroxytetradecanoyl-[acyl-carrier-protein] and UDP-N-acetyl-alpha-D-glucosamine: step 4/6. Hydrolyzes the pyrophosphate bond of UDP-2,3-diacylglucosamine to yield 2,3-diacylglucosamine 1-phosphate (lipid X) and UMP by catalyzing the attack of water at the alpha-P atom. Involved in the biosynthesis of lipid A, a phosphorylated glycolipid that anchors the lipopolysaccharide to the outer membrane of the cell. This is UDP-2,3-diacylglucosamine hydrolase from Pseudomonas paraeruginosa (strain DSM 24068 / PA7) (Pseudomonas aeruginosa (strain PA7)).